The sequence spans 467 residues: Zinc finger and BTB domain-containing protein 43 (467 aa).

N-acetylmethionine is present on M1. A BTB domain is found at 33–97 (CDVSIVVQGH…SYTGRLVMPA (65 aa)). 2 disordered regions span residues 134–153 (LNHG…GLVE) and 162–227 (HTDF…EFHY). Polar residues predominate over residues 140–149 (HQSPSSSNYN). 2 stretches are compositionally biased toward basic and acidic residues: residues 164–174 (DFPKAQELRDG) and 182–194 (KDEL…EHEY). Glycyl lysine isopeptide (Lys-Gly) (interchain with G-Cter in SUMO2) cross-links involve residues K182, K247, K297, and K358. The segment at 373–394 (YPCQCGKSFTHKSQRDRHMSMH) adopts a C2H2-type 1; atypical zinc-finger fold. Residues 400-422 (YGCSVCGKKFKMKHHLVGHMKIH) form a C2H2-type 2 zinc finger. A Phosphothreonine modification is found at T423. The C2H2-type 3; atypical zinc finger occupies 428–450 (YECNICAKRFMWRDSFHRHVTSC). K458 participates in a covalent cross-link: Glycyl lysine isopeptide (Lys-Gly) (interchain with G-Cter in SUMO2).

It belongs to the krueppel C2H2-type zinc-finger protein family. In terms of assembly, interacts with BDP1.

The protein localises to the nucleus. May be involved in transcriptional regulation. The polypeptide is Zinc finger and BTB domain-containing protein 43 (Zbtb43) (Mus musculus (Mouse)).